The following is a 183-amino-acid chain: UPF0200 protein MMP1282 (183 aa).

8 to 15 serves as a coordination point for ATP; that stretch reads GMPGSGKS.

Belongs to the UPF0200 family.

This is UPF0200 protein MMP1282 from Methanococcus maripaludis (strain DSM 14266 / JCM 13030 / NBRC 101832 / S2 / LL).